A 399-amino-acid polypeptide reads, in one-letter code: S-adenosylmethionine synthase (399 aa).

His-16 lines the ATP pocket. Asp-18 contributes to the Mg(2+) binding site. Glu-44 provides a ligand contact to K(+). Positions 57 and 100 each coordinate L-methionine. A flexible loop region spans residues 100-110; it reads QSPDIAQGVDT. ATP-binding positions include 175-177, 246-247, Asp-255, 261-262, Ala-278, and Lys-282; these read DGK, KF, and RK. Position 255 (Asp-255) interacts with L-methionine. Lys-286 lines the L-methionine pocket. An Isoglutamyl lysine isopeptide (Lys-Gln) (interchain with Q-Cter in protein Pup) cross-link involves residue Lys-341.

It belongs to the AdoMet synthase family. Homotetramer; dimer of dimers. Requires Mg(2+) as cofactor. The cofactor is K(+).

Its subcellular location is the cytoplasm. The catalysed reaction is L-methionine + ATP + H2O = S-adenosyl-L-methionine + phosphate + diphosphate. Its pathway is amino-acid biosynthesis; S-adenosyl-L-methionine biosynthesis; S-adenosyl-L-methionine from L-methionine: step 1/1. Catalyzes the formation of S-adenosylmethionine (AdoMet) from methionine and ATP. The overall synthetic reaction is composed of two sequential steps, AdoMet formation and the subsequent tripolyphosphate hydrolysis which occurs prior to release of AdoMet from the enzyme. This Mycolicibacterium smegmatis (strain ATCC 700084 / mc(2)155) (Mycobacterium smegmatis) protein is S-adenosylmethionine synthase.